Here is a 1369-residue protein sequence, read N- to C-terminus: DNA-directed RNA polymerase subunit beta' (1369 aa).

The interval 1 to 43 is disordered; the sequence is MTSSSPKTRKSSTKSKAKRGSKSKKAAEIKAVQRLSKTPPPFR. Basic residues predominate over residues 7–24; that stretch reads KTRKSSTKSKAKRGSKSK. Zn(2+) is bound by residues Cys-253, Cys-320, Cys-327, and Cys-330. The disordered stretch occupies residues 1294–1369; that stretch reads TVDMPSSPVA…LQEEGLLSDE (76 aa). Residues 1342–1351 show a composition bias toward acidic residues; it reads DDELSAEDQM. Low complexity predominate over residues 1357-1369; it reads LEGLQEEGLLSDE.

This sequence belongs to the RNA polymerase beta' chain family. RpoC2 subfamily. As to quaternary structure, in cyanobacteria the RNAP catalytic core is composed of 2 alpha, 1 beta, 1 beta', 1 gamma and 1 omega subunit. When a sigma factor is associated with the core the holoenzyme is formed, which can initiate transcription. It depends on Zn(2+) as a cofactor.

The enzyme catalyses RNA(n) + a ribonucleoside 5'-triphosphate = RNA(n+1) + diphosphate. Its function is as follows. DNA-dependent RNA polymerase catalyzes the transcription of DNA into RNA using the four ribonucleoside triphosphates as substrates. The chain is DNA-directed RNA polymerase subunit beta' from Prochlorococcus marinus (strain NATL1A).